A 188-amino-acid chain; its full sequence is dCTP deaminase (188 aa).

Residues 111–116 (KSTYAR), 135–137 (TLE), Gln-156, Tyr-170, and Gln-180 each bind dCTP. Catalysis depends on Glu-137, which acts as the Proton donor/acceptor.

It belongs to the dCTP deaminase family. Homotrimer.

It catalyses the reaction dCTP + H2O + H(+) = dUTP + NH4(+). Its pathway is pyrimidine metabolism; dUMP biosynthesis; dUMP from dCTP (dUTP route): step 1/2. In terms of biological role, catalyzes the deamination of dCTP to dUTP. The polypeptide is dCTP deaminase (Neisseria meningitidis serogroup B (strain ATCC BAA-335 / MC58)).